Here is a 199-residue protein sequence, read N- to C-terminus: Large ribosomal subunit protein eL13A (199 aa).

A phosphothreonine mark is found at T144 and T152.

The protein belongs to the eukaryotic ribosomal protein eL13 family. In terms of assembly, component of the large ribosomal subunit (LSU). Mature yeast ribosomes consist of a small (40S) and a large (60S) subunit. The 40S small subunit contains 1 molecule of ribosomal RNA (18S rRNA) and 33 different proteins (encoded by 57 genes). The large 60S subunit contains 3 rRNA molecules (25S, 5.8S and 5S rRNA) and 46 different proteins (encoded by 81 genes).

It localises to the cytoplasm. Functionally, component of the ribosome, a large ribonucleoprotein complex responsible for the synthesis of proteins in the cell. The small ribosomal subunit (SSU) binds messenger RNAs (mRNAs) and translates the encoded message by selecting cognate aminoacyl-transfer RNA (tRNA) molecules. The large subunit (LSU) contains the ribosomal catalytic site termed the peptidyl transferase center (PTC), which catalyzes the formation of peptide bonds, thereby polymerizing the amino acids delivered by tRNAs into a polypeptide chain. The nascent polypeptides leave the ribosome through a tunnel in the LSU and interact with protein factors that function in enzymatic processing, targeting, and the membrane insertion of nascent chains at the exit of the ribosomal tunnel. This Saccharomyces cerevisiae (strain ATCC 204508 / S288c) (Baker's yeast) protein is Large ribosomal subunit protein eL13A.